We begin with the raw amino-acid sequence, 329 residues long: MQKDHVGAVYELLNEAAIMIKNELQISYIEALAEAGEMYFLEKTDQLKLPADQKTKQLQALLEKAEFGTYEHEWVRKAFQLAVLKGMKDISHPNRQMTPDTIGLFISYLVNKFMADKKELTILDPALGTGNLLFTVLNQLSEKTANSFGIEIDDVLLKIAYAQANLLKKELELFHQDSLEPLFIDPVDTVICDLPVGYYPNDEGAEAFELKADEGHSFAHHLFIEQSVKHTKPGGYLFFMIPNHLFESSQSGKLKQFFKDKVHINALLQLPKSIFKDEAHAKSILVLQKQGENTKAPGQILLANLPSFSNQKAMLDMMAQFDEWFKKEK.

The protein to type I restriction system adenine methylases.

This is an uncharacterized protein from Bacillus subtilis (strain 168).